Consider the following 197-residue polypeptide: Dephospho-CoA kinase (197 aa).

The 196-residue stretch at 2 to 197 (IVGLTGGIAS…YQQILSLNAA (196 aa)) folds into the DPCK domain. 10–15 (ASGKTL) serves as a coordination point for ATP.

This sequence belongs to the CoaE family.

The protein resides in the cytoplasm. It catalyses the reaction 3'-dephospho-CoA + ATP = ADP + CoA + H(+). It functions in the pathway cofactor biosynthesis; coenzyme A biosynthesis; CoA from (R)-pantothenate: step 5/5. Catalyzes the phosphorylation of the 3'-hydroxyl group of dephosphocoenzyme A to form coenzyme A. The chain is Dephospho-CoA kinase from Dichelobacter nodosus (Bacteroides nodosus).